Here is a 730-residue protein sequence, read N- to C-terminus: Polyribonucleotide nucleotidyltransferase (730 aa).

The Mg(2+) site is built by Asp489 and Asp495. The KH domain maps to 556–615 (PKIDTIKVDVDKIKIVIGKGGETIDKIIEETGVKIDIDEDGNIAIYSSDQEAINRTKEII). Residues 625–693 (GEIYEAEVVR…DKGRIDASMK (69 aa)) enclose the S1 motif domain. Residues 691–730 (SMKALLPRPPRSEKSNKEDHQSVRHHGSPKDDKGKEKYDK) form a disordered region. A compositionally biased stretch (basic and acidic residues) spans 700–730 (PRSEKSNKEDHQSVRHHGSPKDDKGKEKYDK).

The protein belongs to the polyribonucleotide nucleotidyltransferase family. Mg(2+) serves as cofactor.

It is found in the cytoplasm. It carries out the reaction RNA(n+1) + phosphate = RNA(n) + a ribonucleoside 5'-diphosphate. Its function is as follows. Involved in mRNA degradation. Catalyzes the phosphorolysis of single-stranded polyribonucleotides processively in the 3'- to 5'-direction. The chain is Polyribonucleotide nucleotidyltransferase from Streptococcus mutans serotype c (strain ATCC 700610 / UA159).